We begin with the raw amino-acid sequence, 151 residues long: UPF0208 membrane protein YPDSF_1972 (151 aa).

The next 2 helical transmembrane spans lie at 46 to 66 (FGIRFMPPLAIFTLTWQIALG) and 69 to 89 (LGPAIATALFACGLPLQGLWW).

Belongs to the UPF0208 family.

It is found in the cell inner membrane. The chain is UPF0208 membrane protein YPDSF_1972 from Yersinia pestis (strain Pestoides F).